A 35-amino-acid polypeptide reads, in one-letter code: Surfactant protein C (35 aa).

2 S-palmitoyl cysteine lipidation sites follow: Cys-5 and Cys-6.

It is found in the secreted. The protein localises to the extracellular space. It localises to the surface film. In terms of biological role, pulmonary surfactant associated proteins promote alveolar stability by lowering the surface tension at the air-liquid interface in the peripheral air spaces. This Sus scrofa (Pig) protein is Surfactant protein C (SFTPC).